The sequence spans 415 residues: Multidrug resistance protein MdtA (415 aa).

Positions 1–21 are cleaved as a signal peptide; sequence MKGSYKSRWVIVIVVVIAAIA. Residues 34 to 47 show a composition bias toward polar residues; sequence SAAPGATKQAQQSP. 2 disordered regions span residues 34-60 and 392-415; these read SAAP…GPLA and EAQS…GARS. The segment covering 399 to 415 has biased composition (basic and acidic residues); that stretch reads PEEKATSREYAKKGARS.

It belongs to the membrane fusion protein (MFP) (TC 8.A.1) family. In terms of assembly, part of a tripartite efflux system composed of MdtA, MdtB and MdtC.

It localises to the cell inner membrane. In terms of biological role, the MdtABC tripartite complex confers resistance against novobiocin and deoxycholate. This is Multidrug resistance protein MdtA from Escherichia fergusonii (strain ATCC 35469 / DSM 13698 / CCUG 18766 / IAM 14443 / JCM 21226 / LMG 7866 / NBRC 102419 / NCTC 12128 / CDC 0568-73).